The following is a 74-amino-acid chain: Translational regulator CsrA (74 aa).

The protein belongs to the CsrA/RsmA family. As to quaternary structure, homodimer; the beta-strands of each monomer intercalate to form a hydrophobic core, while the alpha-helices form wings that extend away from the core.

Its subcellular location is the cytoplasm. Functionally, a translational regulator that binds mRNA to regulate translation initiation and/or mRNA stability. Usually binds in the 5'-UTR at or near the Shine-Dalgarno sequence preventing ribosome-binding, thus repressing translation. Its main target seems to be the major flagellin gene, while its function is anatagonized by FliW. The protein is Translational regulator CsrA of Alkaliphilus oremlandii (strain OhILAs) (Clostridium oremlandii (strain OhILAs)).